The primary structure comprises 945 residues: Splicing factor, suppressor of white-apricot homolog (945 aa).

2 disordered regions span residues 1–28 (MYGAGGGRAKAERKGGVKEEAGPGGTGT) and 157–190 (YYDPSEPTEEEEPSKQREKSEAENLEENEEPFIA). Composition is skewed to basic and acidic residues over residues 9-21 (AKAERKGGVKEEA) and 169-178 (PSKQREKSEA). The SURP motif 1 repeat unit spans residues 211–253 (IIERTANFVCKQGAQFEIMLKAKQARNSQFDFLRFDHYLNPYY). Positions 269 to 298 (AESKSEEKKKSGPTSDNEEEDDEEDGSYLH) are disordered. Ser-283 carries the phosphoserine modification. Residues 284 to 294 (DNEEEDDEEDG) show a composition bias toward acidic residues. Position 315 is an N6-acetyllysine (Lys-315). 2 disordered regions span residues 332-355 (KAQADSSAPAPPTADGTPAQPSQV) and 403-438 (SSSPGVTTTVPPPPGTTPPPPPTTAESSSGVTSTTT). The segment covering 335-352 (ADSSAPAPPTADGTPAQP) has biased composition (low complexity). The span at 412-425 (VPPPPGTTPPPPPT) shows a compositional bias: pro residues. Residues 426–438 (TAESSSGVTSTTT) show a composition bias toward low complexity. One copy of the SURP motif 2 repeat lies at 458 to 498 (VIDKLAEYVARNGLKFETSVRAKNDQRFEFLQPWHQYNAYY). Disordered regions lie at residues 512 to 566 (GSTQ…TVDG), 589 to 680 (PLEK…QAER), and 714 to 921 (GVMP…VQSK). The segment covering 514 to 527 (TQAASTAEEAPTET) has biased composition (low complexity). The span at 528-540 (AVEESSEAGEDGA) shows a compositional bias: acidic residues. A compositionally biased stretch (basic and acidic residues) spans 589 to 598 (PLEKNRVKLD). A phosphoserine mark is found at Ser-601 and Ser-621. A compositionally biased stretch (low complexity) spans 615 to 630 (SSVANPSPAAAPPSAV). Residues 632 to 686 (EEKKPQLTQEELEAKQAKQKLEDRLAAAAREKLAQASKESKEKQLQAERKRKAAL) adopt a coiled-coil conformation. Position 639 is a phosphothreonine (Thr-639). Basic and acidic residues-rich tracts occupy residues 643 to 679 (LEAKQAKQKLEDRLAAAAREKLAQASKESKEKQLQAE) and 733 to 752 (KPPERPSSRCRDPPREEERE). Composition is skewed to basic residues over residues 753–787 (KKKKKHKKRSRTRSRSPKYHSSSKPRSRSHSKAKH) and 795–810 (TVRRSRSRSRSPRRRA). The span at 811–821 (HSPERRREDRS) shows a compositional bias: basic and acidic residues. Ser-829 and Ser-831 each carry phosphoserine. A compositionally biased stretch (basic residues) spans 835-861 (SRKRTRSRSPHEKKKKRRSRSRTKAKA). Positions 871 to 894 (QAAQRPSAHSAHSASISPVESRGS) are enriched in low complexity. Residues 895 to 908 (SQERSRGVSQEKDG) show a composition bias toward basic and acidic residues. 2 positions are modified to phosphoserine: Ser-899 and Ser-903. A compositionally biased stretch (low complexity) spans 909–920 (QISSAIVSSVQS).

It localises to the nucleus. Functionally, plays a role as an alternative splicing regulator. Regulate its own expression at the level of RNA processing. Also regulates the splicing of fibronectin and CD45 genes. May act, at least in part, by interaction with other R/S-containing splicing factors. Represses the splicing of MAPT/Tau exon 10. This is Splicing factor, suppressor of white-apricot homolog (Sfswap) from Rattus norvegicus (Rat).